The primary structure comprises 203 residues: Thymidylate kinase (203 aa).

Residue 10–17 (GIDGAGKS) coordinates ATP.

This sequence belongs to the thymidylate kinase family.

The enzyme catalyses dTMP + ATP = dTDP + ADP. In terms of biological role, phosphorylation of dTMP to form dTDP in both de novo and salvage pathways of dTTP synthesis. The sequence is that of Thymidylate kinase from Cupriavidus taiwanensis (strain DSM 17343 / BCRC 17206 / CCUG 44338 / CIP 107171 / LMG 19424 / R1) (Ralstonia taiwanensis (strain LMG 19424)).